The chain runs to 505 residues: Trans-cinnamate 4-monooxygenase (505 aa).

A helical membrane pass occupies residues 3–23 (LLLLEKTLLGLFAAIIVASIV). Residues 213–218 (RSRLAQ) and A306 each bind (E)-cinnamate. C447 is a binding site for heme.

Belongs to the cytochrome P450 family. It depends on heme as a cofactor.

It is found in the membrane. It catalyses the reaction (E)-cinnamate + reduced [NADPH--hemoprotein reductase] + O2 = (E)-4-coumarate + oxidized [NADPH--hemoprotein reductase] + H2O + H(+). It functions in the pathway phenylpropanoid metabolism; trans-4-coumarate biosynthesis; trans-4-coumarate from trans-cinnamate: step 1/1. In terms of biological role, catalyzes the first oxidative step of the phenylpropanoid pathway in higher plants by transforming trans-cinnamate into p-coumarate. The compounds formed by this pathway are essential components for lignification, pollination, and defense against ultraviolet light, predators and pathogens. The sequence is that of Trans-cinnamate 4-monooxygenase (CYP73A4) from Catharanthus roseus (Madagascar periwinkle).